A 393-amino-acid polypeptide reads, in one-letter code: Phosphoglycerate kinase (393 aa).

Residues 21–23 (DMN), Arg36, 59–62 (HLGR), Arg114, and Arg147 each bind substrate. Residues Lys198, Glu320, and 346 to 349 (GGDT) contribute to the ATP site.

The protein belongs to the phosphoglycerate kinase family. Monomer.

It localises to the cytoplasm. The enzyme catalyses (2R)-3-phosphoglycerate + ATP = (2R)-3-phospho-glyceroyl phosphate + ADP. It participates in carbohydrate degradation; glycolysis; pyruvate from D-glyceraldehyde 3-phosphate: step 2/5. This chain is Phosphoglycerate kinase, found in Thiobacillus denitrificans (strain ATCC 25259 / T1).